The sequence spans 273 residues: HMP-PP phosphatase (273 aa).

The active-site Nucleophile is the Asp8. Mg(2+) is bound by residues Asp8, Asp10, and Asp212.

This sequence belongs to the HAD-like hydrolase superfamily. Cof family. It depends on Mg(2+) as a cofactor.

The catalysed reaction is 4-amino-2-methyl-5-(diphosphooxymethyl)pyrimidine + H2O = 4-amino-2-methyl-5-(phosphooxymethyl)pyrimidine + phosphate + H(+). Its function is as follows. Catalyzes the hydrolysis of 4-amino-2-methyl-5-hydroxymethylpyrimidine pyrophosphate (HMP-PP) to 4-amino-2-methyl-5-hydroxymethylpyrimidine phosphate (HMP-P). The polypeptide is HMP-PP phosphatase (Yersinia pseudotuberculosis serotype I (strain IP32953)).